The chain runs to 102 residues: Large ribosomal subunit protein uL24 (102 aa).

It belongs to the universal ribosomal protein uL24 family. Part of the 50S ribosomal subunit.

Functionally, one of two assembly initiator proteins, it binds directly to the 5'-end of the 23S rRNA, where it nucleates assembly of the 50S subunit. Its function is as follows. One of the proteins that surrounds the polypeptide exit tunnel on the outside of the subunit. The chain is Large ribosomal subunit protein uL24 from Macrococcus caseolyticus (strain JCSC5402) (Macrococcoides caseolyticum).